Reading from the N-terminus, the 65-residue chain is Sulfur carrier protein TtuB (65 aa).

Glycine 65 is subject to 1-thioglycine; alternate. Glycine 65 is subject to Glycyl adenylate; alternate. Residue glycine 65 forms a Glycyl cysteine thioester (Gly-Cys) (interchain with C-192 in TtuC); alternate linkage. Glycine 65 participates in a covalent cross-link: Glycyl lysine isopeptide (Gly-Lys) (interchain with K-? in acceptor proteins); alternate.

It belongs to the TtuB family. In terms of assembly, is able to form a heterocomplex with TtuA. In terms of processing, the C-terminal glycine residue of TtuB is first activated by TtuC as an acyl-adenylate (TtuB-COAMP), and then converted to the thiocarboxylate form (TtuB-COSH) by the cysteine desulfurases IscS or SufS.

It participates in tRNA modification. Functionally, required for the 2-thiolation of 5-methyluridine residue at position 54 in the T loop of tRNAs, leading to 5-methyl-2-thiouridine (m(5)s(2)U or s(2)T). This modification allows thermal stabilization of tRNAs in thermophilic microorganisms, and is essential for cell growth at high temperatures. Thiocarboxylated TtuB functions as the sulfur donor in the sulfurtransferase reaction catalyzed by TtuA. TtuB also functions as a protein modifier covalently attached to lysine residues of the target proteins TtuA and TtuC. TtuB conjugation might play a regulatory role to ensure appropriate sulfur transfer in cells. In Thermus thermophilus (strain ATCC BAA-163 / DSM 7039 / HB27), this protein is Sulfur carrier protein TtuB.